The chain runs to 98 residues: MSPLHFSFYSAFTFSSLGLAFHRTHLISALLCLESMMLSMFIPLSIWPVENQTPSFALVPILMLAFSACEAGTGLAMLVASARTHGSDHLHNLNLLQC.

The next 3 membrane-spanning stretches (helical) occupy residues 1–21, 26–46, and 56–76; these read MSPL…GLAF, LISA…PLSI, and FALV…TGLA.

The protein belongs to the complex I subunit 4L family. Core subunit of respiratory chain NADH dehydrogenase (Complex I) which is composed of 45 different subunits.

It localises to the mitochondrion inner membrane. The catalysed reaction is a ubiquinone + NADH + 5 H(+)(in) = a ubiquinol + NAD(+) + 4 H(+)(out). Its function is as follows. Core subunit of the mitochondrial membrane respiratory chain NADH dehydrogenase (Complex I) which catalyzes electron transfer from NADH through the respiratory chain, using ubiquinone as an electron acceptor. Part of the enzyme membrane arm which is embedded in the lipid bilayer and involved in proton translocation. The protein is NADH-ubiquinone oxidoreductase chain 4L (MT-ND4L) of Gallus gallus (Chicken).